We begin with the raw amino-acid sequence, 511 residues long: Bifunctional purine biosynthesis protein PurH (511 aa).

In terms of domain architecture, MGS-like spans 1 to 145 (MKQRALVSVS…KNHKFVSVIV (145 aa)).

Belongs to the PurH family.

The enzyme catalyses (6R)-10-formyltetrahydrofolate + 5-amino-1-(5-phospho-beta-D-ribosyl)imidazole-4-carboxamide = 5-formamido-1-(5-phospho-D-ribosyl)imidazole-4-carboxamide + (6S)-5,6,7,8-tetrahydrofolate. It carries out the reaction IMP + H2O = 5-formamido-1-(5-phospho-D-ribosyl)imidazole-4-carboxamide. It participates in purine metabolism; IMP biosynthesis via de novo pathway; 5-formamido-1-(5-phospho-D-ribosyl)imidazole-4-carboxamide from 5-amino-1-(5-phospho-D-ribosyl)imidazole-4-carboxamide (10-formyl THF route): step 1/1. Its pathway is purine metabolism; IMP biosynthesis via de novo pathway; IMP from 5-formamido-1-(5-phospho-D-ribosyl)imidazole-4-carboxamide: step 1/1. In Bacillus cereus (strain AH187), this protein is Bifunctional purine biosynthesis protein PurH.